Here is a 345-residue protein sequence, read N- to C-terminus: Biotin synthase (345 aa).

Residues 66–291 enclose the Radical SAM core domain; it reads PEVEVEGIIS…RTMLRFAGGR (226 aa). Positions 81, 85, and 88 each coordinate [4Fe-4S] cluster. Positions 124, 157, 216, and 286 each coordinate [2Fe-2S] cluster.

This sequence belongs to the radical SAM superfamily. Biotin synthase family. In terms of assembly, homodimer. It depends on [4Fe-4S] cluster as a cofactor. Requires [2Fe-2S] cluster as cofactor.

The enzyme catalyses (4R,5S)-dethiobiotin + (sulfur carrier)-SH + 2 reduced [2Fe-2S]-[ferredoxin] + 2 S-adenosyl-L-methionine = (sulfur carrier)-H + biotin + 2 5'-deoxyadenosine + 2 L-methionine + 2 oxidized [2Fe-2S]-[ferredoxin]. Its pathway is cofactor biosynthesis; biotin biosynthesis; biotin from 7,8-diaminononanoate: step 2/2. Functionally, catalyzes the conversion of dethiobiotin (DTB) to biotin by the insertion of a sulfur atom into dethiobiotin via a radical-based mechanism. The sequence is that of Biotin synthase from Mycobacterium avium (strain 104).